A 737-amino-acid polypeptide reads, in one-letter code: MASRLLLLPRRRSRHGGASLLLARLLSSSSSEAGGGGAVEKVLVANRGEIACRVMRTARRLGIPTVAVYSDADRGALHVRAADEAVRLGPPPARESYLNASAIVDAALRTGAKAIHPGYGFLSESADFAQLCKAEGLTFIGPPPSAIRDMGDKSASKRIMGAAGVPLVPGYHGAEQDIELLKLEANKIGYPVLIKPTHGGGGKGMRIVQRPEDFVDSVLSAQREAAASFGINTLLVEKYITQPRHIEVQIFGDQHGNVIHLYERDCSLQRRHQKIIEEAPAPNVTAQFRSHIGEAAVSAAKAVGYYSAGTVEFIVDTLSGEFYFMEMNTRLQVEHPVTEMIVGQDLVEWQIRIANGECLPLSQEQVPLNGHAFEARIYAENVPRGFLPATGTLHHYRPVPSTATVRVETGVEEGDTVSMHYDPMIAKLVVWGESRNAALVKLKNSLSNFQIAGLPTNVGFLQELAGHSAFEKGLVDTHFIERYQNDLLSTSTQALSGSHEAEELGAILAAACICKKDHVSSEVSLHDKKLSMWYAHPPFRMHHFAKRLMEFELDRELGGSSDDLLKLSVTYRSDGTYFVETEDGSSPGLDVKVDSRGDHDFRVDVGGLQTDVTLAFYSKDNCNHIHIWHGKHHHHYRQTLRAEQSPDDSSQPSASSEARSHPKGSVLAPMAGLVVKVLLKDGARVEEGQPVMVMEAMKMEHVVKAPCAGYVEGLKATAGQQVFDSSVLFTVKENKPN.

The transit peptide at 1 to 33 directs the protein to the mitochondrion; that stretch reads MASRLLLLPRRRSRHGGASLLLARLLSSSSSEA. Residues 38–485 form the Biotin carboxylation domain; that stretch reads AVEKVLVANR…DTHFIERYQN (448 aa). ATP is bound by residues Lys-153, 185 to 246, Glu-237, and His-272; that span reads ANKI…PRHI. Positions 157-355 constitute an ATP-grasp domain; the sequence is KRIMGAAGVP…LVEWQIRIAN (199 aa). Residues Glu-312, Glu-326, and Asn-328 each coordinate Mn(2+). The active site involves Arg-330. The disordered stretch occupies residues 636–665; it reads YRQTLRAEQSPDDSSQPSASSEARSHPKGS. Low complexity predominate over residues 647-657; the sequence is DDSSQPSASSE. A Biotinyl-binding domain is found at 656-732; that stretch reads SEARSHPKGS…FDSSVLFTVK (77 aa). Position 698 is an N6-biotinyllysine (Lys-698).

Probably a heterodimer composed of biotin-containing alpha subunits and beta subunits. Biotin is required as a cofactor. Requires Mn(2+) as cofactor.

It is found in the mitochondrion matrix. It carries out the reaction 3-methylbut-2-enoyl-CoA + hydrogencarbonate + ATP = 3-methyl-(2E)-glutaconyl-CoA + ADP + phosphate + H(+). It functions in the pathway amino-acid degradation; L-leucine degradation; (S)-3-hydroxy-3-methylglutaryl-CoA from 3-isovaleryl-CoA: step 2/3. Functionally, biotin-attachment subunit of the 3-methylcrotonyl-CoA carboxylase, an enzyme that catalyzes the conversion of 3-methylcrotonyl-CoA to 3-methylglutaconyl-CoA, a critical step for leucine and isovaleric acid catabolism. This Oryza sativa subsp. japonica (Rice) protein is Methylcrotonoyl-CoA carboxylase subunit alpha, mitochondrial (MCCA).